The following is a 471-amino-acid chain: Coagulation factor IX (471 aa).

A signal peptide spans 1–19; the sequence is MAKIPLILSFCLLEAFLGA. A propeptide spanning residues 20-39 is cleaved from the precursor; it reads ESTVFIENKEASTVLSRTRR. The 46-residue stretch at 40–85 folds into the Gla domain; it reads GNSNRLEELIPGNLERECIEEKCSFEEAREVFENTEKTMEFWKIYI. The Ca(2+) site is built by Asn-41, Glu-46, Glu-47, Glu-54, Glu-56, Glu-59, Glu-60, Glu-65, Glu-66, and Glu-69. A 4-carboxyglutamate mark is found at Glu-46, Glu-47, Glu-54, Glu-56, Glu-59, Glu-60, Glu-65, Glu-66, Glu-69, Glu-72, Glu-75, and Glu-79. Glu-54 contacts Mg(2+). A disulfide bridge links Cys-57 with Cys-62. Residue Glu-59 participates in Mg(2+) binding. Glu-65 serves as a coordination point for Mg(2+). A Mg(2+)-binding site is contributed by Glu-69. Ca(2+)-binding residues include Glu-75, Glu-79, Asp-86, Gly-87, and Gln-89. Mg(2+)-binding residues include Glu-75 and Glu-79. An EGF-like 1; calcium-binding domain is found at 86 to 122; sequence DGDQCNSNPCKNGAVCKDGVSSYECMCPPGYGGRNCE. 10 disulfides stabilise this stretch: Cys-90/Cys-101, Cys-95/Cys-110, Cys-112/Cys-121, Cys-127/Cys-138, Cys-134/Cys-148, Cys-150/Cys-163, Cys-171/Cys-345, Cys-262/Cys-278, Cys-392/Cys-406, and Cys-417/Cys-445. Ser-92 carries O-linked (Glc...) serine glycosylation. Asp-103 provides a ligand contact to Ca(2+). At Asp-103 the chain carries (3R)-3-hydroxyaspartate. Ser-107 carries the phosphoserine modification. The EGF-like 2 domain maps to 123 to 164; sequence IDSTCATKNGGCEHFCRHDTPQKAVCSCASGYKLHEDGKSCK. Residues 186-235 constitute a propeptide, activation peptide; the sequence is TENTIERWNITAHDEGDAHDEALDITEPPPPPTTSAAPAKIVPITKNDTR. Residues 236–469 enclose the Peptidase S1 domain; the sequence is VVGGYDSVKG…YVKWIRETTR (234 aa). His-277 (charge relay system) is an active-site residue. Glu-291, Asn-293, Glu-296, and Glu-301 together coordinate Ca(2+). Asp-325 (charge relay system) is an active-site residue. The Charge relay system role is filled by Ser-421.

Belongs to the peptidase S1 family. As to quaternary structure, heterodimer of a light chain and a heavy chain; disulfide-linked. In terms of processing, activated by factor XIa, which excises the activation peptide. The propeptide can also be removed by snake venom protease. Activated by coagulation factor VIIa-tissue factor (F7-F3) complex in calcium-dependent manner. Post-translationally, the iron and 2-oxoglutarate dependent 3-hydroxylation of aspartate and asparagine is (R) stereospecific within EGF domains.

The protein resides in the secreted. It catalyses the reaction Selective cleavage of Arg-|-Ile bond in factor X to form factor Xa.. Functionally, factor IX is a vitamin K-dependent plasma protein that participates in the intrinsic pathway of blood coagulation by converting factor X to its active form in the presence of Ca(2+) ions, phospholipids, and factor VIIIa. This is Coagulation factor IX (F9) from Gallus gallus (Chicken).